The following is a 567-amino-acid chain: Beta-galactoside-specific lectin 2 (567 aa).

Positions Met1–Asn33 are cleaved as a signal peptide. Asn145 carries N-linked (GlcNAc...) asparagine glycosylation. The active site involves Glu198. Cystine bridges form between Cys280–Cys306 and Cys322–Cys341. Residues Asp288 to Val301 constitute a propeptide, connecting peptide. Residues Ser309–Ser439 enclose the Ricin B-type lectin 1 domain. Residue Asp324 to Arg326 coordinates D-galactose. An N-linked (GlcNAc...) asparagine glycan is attached at Asn362. Cysteines 365 and 382 form a disulfide. A glycan (N-linked (GlcNAc...) asparagine) is linked at Asn440. In terms of domain architecture, Ricin B-type lectin 2 spans Ala443–Val566. Cystine bridges form between Cys456-Cys469 and Cys495-Cys512. Asp539–Arg541 provides a ligand contact to D-galactose.

The protein belongs to the ribosome-inactivating protein family. Type 2 RIP subfamily. Disulfide-linked dimer of A and B chains.

It catalyses the reaction Endohydrolysis of the N-glycosidic bond at one specific adenosine on the 28S rRNA.. Its function is as follows. The A chain is responsible for inhibiting protein synthesis through the catalytic inactivation of 60S ribosomal subunits by removing adenine from position 4,324 of 28S rRNA. The B chain binds to cell receptors and probably facilitates the entry into the cell of the A chain; B chains are also responsible for cell agglutination (lectin activity). The chain is Beta-galactoside-specific lectin 2 from Viscum album (European mistletoe).